A 153-amino-acid polypeptide reads, in one-letter code: Ribosome maturation factor RimP (153 aa).

The protein belongs to the RimP family.

The protein resides in the cytoplasm. Required for maturation of 30S ribosomal subunits. This is Ribosome maturation factor RimP from Trichormus variabilis (strain ATCC 29413 / PCC 7937) (Anabaena variabilis).